The chain runs to 5538 residues: Leashin (5538 aa).

The segment covering 1-10 (MFRALMGGGR) has biased composition (gly residues). Disordered stretches follow at residues 1–270 (MFRA…SSMG), 286–315 (EVDPAPGRPDRPTAGTTSEPPKPSNTTFGI), 331–365 (LPLPASPTSPPEPVPTTAPYAPPVTSSTTKPPHTH), 510–555 (SRDA…KKSS), 596–712 (TESV…DISQ), 800–901 (AATS…FPTG), 913–944 (ALASTQDRDSRLPRQHASSSSGSLQHVAPVPT), 1027–1145 (NRPH…KDSF), 1164–1297 (VLSG…GYRD), 1310–1398 (PTPP…RYVS), 1432–1993 (EDPT…TSVE), 2067–2146 (SELL…VNAF), 2165–2207 (NRLS…SPPA), 2233–3065 (PEAA…SQPI), 3077–3894 (MAEE…EIVS), 3910–4034 (EEKA…DTGL), 4072–4128 (KFKQ…EEPL), 4238–4421 (EAAL…SNQA), 4442–4463 (PRPLEVEPAASEVYQGATDEND), 4509–4698 (LRRQ…TSNT), 4733–4850 (KTDG…VEQA), and 4910–5052 (ALTV…RHRR). Positions 1–1100 (MFRALMGGGR…RASGVQLIDR (1100 aa)) are woronin bodies-binding region. Positions 14-23 (SRSTTSSSKS) are enriched in low complexity. Composition is skewed to basic and acidic residues over residues 42-51 (SRGDDRDRGL) and 89-167 (VEHD…ERSR). The segment covering 299–313 (AGTTSEPPKPSNTTF) has biased composition (polar residues). The span at 334 to 352 (PASPTSPPEPVPTTAPYAP) shows a compositional bias: pro residues. A compositionally biased stretch (basic residues) spans 514 to 523 (PRKHHYRQRR). Positions 598-607 (SVSTARRSQT) are enriched in polar residues. Positions 639–655 (HRSRSRSHSSSRNRRHS) are enriched in basic residues. Residues 660 to 674 (AAVGAAVGSGAIALA) show a composition bias toward low complexity. Residues 682–698 (SRSRSRSRFPRKSKGRK) are compositionally biased toward basic residues. Positions 809-825 (RAGEILVAKETRSRHSD) are enriched in basic and acidic residues. 2 stretches are compositionally biased toward low complexity: residues 842–851 (GDQSSSSVSS) and 862–880 (GSDESQSSDSGTSKWGWRW). Residues 881–891 (GSKKNKKKKRA) show a composition bias toward basic residues. Composition is skewed to basic and acidic residues over residues 1068-1091 (LTKEQADKERRMDRLEQLKRDAER), 1098-1145 (IDRD…KDSF), 1178-1198 (SQRRHEERRQQRRAERRRGSE), 1207-1226 (SKSERAQETTDYLPEERQPE), 1356-1365 (WGEHKTHEYE), 1375-1387 (SVDHETTREREQP), 1447-1462 (GRVEYRDPWVETESKS), and 1478-1488 (EEKAPSSRVIE). Positions 1506–1516 (QESSEPQTRTS) are enriched in low complexity. Composition is skewed to basic and acidic residues over residues 1521 to 1536 (VIDRLSEKQDERDGSR), 1549 to 1559 (GKERDESELRA), and 1572 to 1594 (EELRSDPKRDVDSRDDGDVDRRS). Over residues 1639–1648 (KKKRRKRRSK) the composition is skewed to basic residues. 3 stretches are compositionally biased toward basic and acidic residues: residues 1672 to 1686 (EKLKSMDDKDKEKKA), 1700 to 1773 (EPVD…QRRE), and 1788 to 1800 (KSGEYEKDRKLSE). Composition is skewed to low complexity over residues 1867 to 1876 (PAPRSRSRPA) and 1889 to 1898 (SQSSRRSSIL). Over residues 1950-1975 (KNSREMRPLWLVERHGPGHGEHKLEE) the composition is skewed to basic and acidic residues. Composition is skewed to polar residues over residues 1984–1993 (KTSSANTSVE) and 2121–2130 (TPQNNVTAAS). Basic and acidic residues-rich tracts occupy residues 2187 to 2196 (DADRTHKPIA), 2269 to 2279 (VPRDDKRRDSV), and 2307 to 2320 (GENKELPSEAKNEN). Residues 2321 to 2331 (ANDNSQAQTEQ) are compositionally biased toward polar residues. The segment covering 2344 to 2355 (AKKKKKKNKKKR) has biased composition (basic residues). Positions 2358–2370 (MDSNTQEPTTPVD) are enriched in polar residues. Residues 2427–2441 (DVEKAIEAPDVRKEL) show a composition bias toward basic and acidic residues. Residues 2449–2461 (APEDTPAEPTAET) are compositionally biased toward low complexity. The span at 2473–2484 (KKSKKKKKKKNK) shows a compositional bias: basic residues. A compositionally biased stretch (polar residues) spans 2494 to 2525 (DPASTETPEASAANSQVVAAEQVESTLETTQP). 3 stretches are compositionally biased toward basic and acidic residues: residues 2580-2590 (NQAKELPHPEE), 2647-2661 (PEDKNGEAEQADLKS), and 2677-2691 (ALDKELSEISERPAE). A compositionally biased stretch (low complexity) spans 2719 to 2734 (EEPTPTAAELETPLSR). Over residues 2735-2747 (KNSKKNKKKNKRK) the composition is skewed to basic residues. Positions 2796–2812 (DENKGESRDVQAVKEET) are enriched in basic and acidic residues. Residues 2874–2884 (KKKAKKKKNRK) are compositionally biased toward basic residues. Positions 2885 to 2894 (TANVSESQPE) are enriched in polar residues. 2 stretches are compositionally biased toward basic residues: residues 3003–3013 (KKSKKNKKKKQ) and 3089–3100 (KKTKKEKKKKRQ). Basic and acidic residues predominate over residues 3145-3172 (AIEHAEAAAEHSQEQPNKDVTLHADHSP). Residues 3248 to 3268 (PAMEGGAAAEELVAVEPDVLE) show a composition bias toward low complexity. A compositionally biased stretch (polar residues) spans 3293-3303 (ELVNAETTQKT). Positions 3329–3341 (SKKKDKKKKKKRQ) are enriched in basic residues. Residues 3347–3367 (DEQRSSTKEEPTAEFSSDHVP) show a composition bias toward basic and acidic residues. Low complexity-rich tracts occupy residues 3397–3409 (TQTAAEPTPSSAS) and 3422–3435 (ESTQEPAAEEAQTA). Basic residues predominate over residues 3436-3450 (KSKKKAKKDKKKRKS). Residues 3480-3495 (EGPKPGDKPTSPKDSS) show a composition bias toward basic and acidic residues. The segment covering 3547–3564 (EEQAVVEETVAPPVVDEA) has biased composition (low complexity). Composition is skewed to polar residues over residues 3565–3580 (SQLQEQKVSSETLWSE) and 3604–3613 (VSPSLENNEG). 2 stretches are compositionally biased toward basic residues: residues 3642 to 3652 (KSKKNKKKKKR) and 3716 to 3730 (KAKKKAKKKDKKRQS). Positions 3768–3787 (TFSQETSETISTEAKSSEPS) are enriched in polar residues. Positions 3800-3819 (KENQSHDTEPHGGNDKDLTW) are enriched in basic and acidic residues. The span at 3823-3837 (MVSSQVEQQQGTPSD) shows a compositional bias: polar residues. Basic and acidic residues predominate over residues 3876–3893 (DRLERSGEEGTRVKKEIV). Polar residues-rich tracts occupy residues 3915-3925 (ISSQGEDTIQV) and 3965-3980 (KDQFTSIEVNDPSQSK). Acidic residues predominate over residues 4010 to 4020 (TSQDDSVDAVQ). Residues 4111-4123 (ESRENKFKEKQLA) show a composition bias toward basic and acidic residues. The span at 4244 to 4255 (KNSKKKSKKAKK) shows a compositional bias: basic residues. Residues 4328-4345 (LGQTPNMDNQTDDVQSTE) are compositionally biased toward polar residues. Residues 4378–4391 (KLSKKDRRKAKKKS) are compositionally biased toward basic residues. The segment covering 4392 to 4406 (AKDAIEPSDEPELRN) has biased composition (basic and acidic residues). A septal pore-binding region region spans residues 4495 to 5538 (AIAEFDETAI…SSTMDISNVI (1044 aa)). Residues 4554 to 4570 (TEQSAGLQAKSVSSQGA) are compositionally biased toward polar residues. Basic and acidic residues-rich tracts occupy residues 4574 to 4591 (IQDDMQHPENRLARDQTK) and 4660 to 4673 (EESHLQSQQDEKGP). The span at 4940–4954 (SSVSSVKSVQSTHSV) shows a compositional bias: low complexity. A compositionally biased stretch (polar residues) spans 4966–4988 (RNTSGDLRAASQAQESHGTQPHA). Residues 4989–4998 (TPQPPQPPPS) are compositionally biased toward pro residues. Positions 5050-5223 (HRRSMQHLQE…QQQIAASLHD (174 aa)) form a coiled coil.

In terms of assembly, binds directly or indirectly to the Woronin body major protein hexA.

It localises to the cell septum. In terms of biological role, acts as the tether and is essential for anchoring of Woronin bodies at the septal pore. In damaged hyphae, Woronin bodies occlude septal pores in order to separate intact from damaged compartments. This Aspergillus fumigatus (strain ATCC MYA-4609 / CBS 101355 / FGSC A1100 / Af293) (Neosartorya fumigata) protein is Leashin.